The following is a 169-amino-acid chain: 6,7-dimethyl-8-ribityllumazine synthase (169 aa).

5-amino-6-(D-ribitylamino)uracil-binding positions include tryptophan 27, 61–63, and 90–92; these read SYE and VLI. 95-96 is a (2S)-2-hydroxy-3-oxobutyl phosphate binding site; that stretch reads ST. The Proton donor role is filled by histidine 98. Phenylalanine 123 contributes to the 5-amino-6-(D-ribitylamino)uracil binding site. A (2S)-2-hydroxy-3-oxobutyl phosphate-binding site is contributed by arginine 137.

The protein belongs to the DMRL synthase family. In terms of assembly, homopentamer.

It is found in the mitochondrion intermembrane space. The catalysed reaction is (2S)-2-hydroxy-3-oxobutyl phosphate + 5-amino-6-(D-ribitylamino)uracil = 6,7-dimethyl-8-(1-D-ribityl)lumazine + phosphate + 2 H2O + H(+). It participates in cofactor biosynthesis; riboflavin biosynthesis; riboflavin from 2-hydroxy-3-oxobutyl phosphate and 5-amino-6-(D-ribitylamino)uracil: step 1/2. Catalyzes the formation of 6,7-dimethyl-8-ribityllumazine by condensation of 5-amino-6-(D-ribitylamino)uracil with 3,4-dihydroxy-2-butanone 4-phosphate. This is the penultimate step in the biosynthesis of riboflavin. The sequence is that of 6,7-dimethyl-8-ribityllumazine synthase (RIB4) from Saccharomyces cerevisiae (strain ATCC 204508 / S288c) (Baker's yeast).